The chain runs to 415 residues: Gamma-glutamyl phosphate reductase (415 aa).

The protein belongs to the gamma-glutamyl phosphate reductase family.

It localises to the cytoplasm. The enzyme catalyses L-glutamate 5-semialdehyde + phosphate + NADP(+) = L-glutamyl 5-phosphate + NADPH + H(+). Its pathway is amino-acid biosynthesis; L-proline biosynthesis; L-glutamate 5-semialdehyde from L-glutamate: step 2/2. Its function is as follows. Catalyzes the NADPH-dependent reduction of L-glutamate 5-phosphate into L-glutamate 5-semialdehyde and phosphate. The product spontaneously undergoes cyclization to form 1-pyrroline-5-carboxylate. This chain is Gamma-glutamyl phosphate reductase, found in Xylella fastidiosa (strain 9a5c).